We begin with the raw amino-acid sequence, 101 residues long: Apolipoprotein C-II (101 aa).

The N-terminal stretch at 1 to 22 (MGTRFLLALCLVLLVLGFEVQG) is a signal peptide. The segment at 66–74 (AVDEKLRDL) is lipid binding. The lipoprotein lipase cofactor stretch occupies residues 78–101 (STAAMSTYTGIFTDQVLSVLKGEE).

The protein belongs to the apolipoprotein C2 family. In terms of processing, proapolipoprotein C-II is synthesized as a sialic acid containing glycoprotein which is subsequently desialylated prior to its proteolytic processing. Proapolipoprotein C-II, the major form found in plasma undergoes proteolytic cleavage of its N-terminal hexapeptide to generate apolipoprotein C-II, which occurs as the minor form in plasma.

The protein resides in the secreted. In terms of biological role, component of chylomicrons, very low-density lipoproteins (VLDL), low-density lipoproteins (LDL), and high-density lipoproteins (HDL) in plasma. Plays an important role in lipoprotein metabolism as an activator of lipoprotein lipase. Both proapolipoprotein C-II and apolipoprotein C-II can activate lipoprotein lipase. This chain is Apolipoprotein C-II (APOC2), found in Colobus guereza (Mantled guereza).